The chain runs to 377 residues: Pyruvate dehydrogenase E1 component subunit alpha, mitochondrial (377 aa).

Residues 1–26 constitute a mitochondrion transit peptide; sequence MLSNFLKVNSKALGHIRTFASKSGEI. Positions 83, 109, 110, 156, 158, 187, 188, 189, 216, and 218 each coordinate pyruvate. Tyrosine 109, arginine 110, glycine 156, valine 158, aspartate 187, glycine 188, alanine 189, and asparagine 216 together coordinate thiamine diphosphate. Aspartate 187 lines the Mg(2+) pocket. The Mg(2+) site is built by asparagine 216 and tyrosine 218. Position 283 (histidine 283) interacts with thiamine diphosphate.

In terms of assembly, tetramer of 2 alpha and 2 beta subunits. Thiamine diphosphate is required as a cofactor. Mg(2+) serves as cofactor.

The protein resides in the mitochondrion matrix. The catalysed reaction is N(6)-[(R)-lipoyl]-L-lysyl-[protein] + pyruvate + H(+) = N(6)-[(R)-S(8)-acetyldihydrolipoyl]-L-lysyl-[protein] + CO2. Its activity is regulated as follows. E1 activity is regulated by phosphorylation (inactivation) and dephosphorylation (activation) of the alpha subunit. In terms of biological role, the pyruvate dehydrogenase complex catalyzes the overall conversion of pyruvate to acetyl-CoA and CO(2). It contains multiple copies of three enzymatic components: pyruvate dehydrogenase (E1), dihydrolipoamide acetyltransferase (E2) and lipoamide dehydrogenase (E3). The polypeptide is Pyruvate dehydrogenase E1 component subunit alpha, mitochondrial (pdhA) (Dictyostelium discoideum (Social amoeba)).